The sequence spans 359 residues: NADH-quinone oxidoreductase subunit H (359 aa).

The next 8 membrane-spanning stretches (helical) occupy residues 16–36 (IWPA…AVLA), 94–114 (GLFI…WAVI), 128–148 (GLLF…IAGW), 167–187 (VSYE…SGSL), 205–225 (GLTF…VYFI), 261–281 (FFLA…LLFL), 296–316 (IPGW…FLWV), and 331–351 (LGWK…GAWM).

Belongs to the complex I subunit 1 family. As to quaternary structure, NDH-1 is composed of 14 different subunits. Subunits NuoA, H, J, K, L, M, N constitute the membrane sector of the complex.

The protein resides in the cell inner membrane. The enzyme catalyses a quinone + NADH + 5 H(+)(in) = a quinol + NAD(+) + 4 H(+)(out). Functionally, NDH-1 shuttles electrons from NADH, via FMN and iron-sulfur (Fe-S) centers, to quinones in the respiratory chain. The immediate electron acceptor for the enzyme in this species is believed to be ubiquinone. Couples the redox reaction to proton translocation (for every two electrons transferred, four hydrogen ions are translocated across the cytoplasmic membrane), and thus conserves the redox energy in a proton gradient. This subunit may bind ubiquinone. This Polaromonas naphthalenivorans (strain CJ2) protein is NADH-quinone oxidoreductase subunit H.